A 392-amino-acid polypeptide reads, in one-letter code: S-adenosylmethionine synthase (392 aa).

Glu10 contacts Mg(2+). Position 16 (His16) interacts with ATP. Glu44 lines the K(+) pocket. Glu57 and Gln100 together coordinate L-methionine. ATP contacts are provided by residues 168 to 170 (DGK), 236 to 239 (SGRF), Asp247, 253 to 254 (RK), Ala270, Lys274, and Lys278. Asp247 lines the L-methionine pocket. Lys278 is an L-methionine binding site.

It belongs to the AdoMet synthase family. In terms of assembly, homotetramer. It depends on Mn(2+) as a cofactor. Mg(2+) serves as cofactor. Requires Co(2+) as cofactor. K(+) is required as a cofactor.

The protein resides in the cytoplasm. It catalyses the reaction L-methionine + ATP + H2O = S-adenosyl-L-methionine + phosphate + diphosphate. Its pathway is amino-acid biosynthesis; S-adenosyl-L-methionine biosynthesis; S-adenosyl-L-methionine from L-methionine: step 1/1. Catalyzes the formation of S-adenosylmethionine from methionine and ATP. The reaction comprises two steps that are both catalyzed by the same enzyme: formation of S-adenosylmethionine (AdoMet) and triphosphate, and subsequent hydrolysis of the triphosphate. The sequence is that of S-adenosylmethionine synthase (SAMS) from Phaseolus lunatus (Lima bean).